A 329-amino-acid polypeptide reads, in one-letter code: Serpentine receptor class alpha-8 (329 aa).

The next 6 helical transmembrane spans lie at 26 to 46, 60 to 80, 141 to 161, 187 to 207, 231 to 251, and 273 to 293; these read VDLITSFFTYMLSIIAIKMVL, FLNIFYANLYQIVYSIDVVVI, IFVGSFIAIVVMISTTSTGKL, TIHFYISTVVSLFNLAASVAL, VIESTETICFLNFTQFVFMFI, and FWVVWCYTVPFIALTFPLLLI.

It belongs to the nematode receptor-like protein sra family.

Its subcellular location is the membrane. The polypeptide is Serpentine receptor class alpha-8 (sra-8) (Caenorhabditis elegans).